Here is a 420-residue protein sequence, read N- to C-terminus: Glutamyl-tRNA reductase (420 aa).

Residues 49–52 (TCNR), Ser-109, 114–116 (EPQ), and Gln-120 contribute to the substrate site. Cys-50 acts as the Nucleophile in catalysis. 189-194 (GAGETI) serves as a coordination point for NADP(+).

It belongs to the glutamyl-tRNA reductase family. As to quaternary structure, homodimer.

It catalyses the reaction (S)-4-amino-5-oxopentanoate + tRNA(Glu) + NADP(+) = L-glutamyl-tRNA(Glu) + NADPH + H(+). The protein operates within porphyrin-containing compound metabolism; protoporphyrin-IX biosynthesis; 5-aminolevulinate from L-glutamyl-tRNA(Glu): step 1/2. Functionally, catalyzes the NADPH-dependent reduction of glutamyl-tRNA(Glu) to glutamate 1-semialdehyde (GSA). This chain is Glutamyl-tRNA reductase, found in Serratia proteamaculans (strain 568).